Here is a 436-residue protein sequence, read N- to C-terminus: Ribosomal protein uS12 methylthiotransferase RimO (436 aa).

Residues 2–117 (KNVGIISLGC…IAEVIEKIEK (116 aa)) enclose the MTTase N-terminal domain. [4Fe-4S] cluster is bound by residues Cys11, Cys47, Cys80, Cys154, Cys158, and Cys161. Residues 140–369 (TTPNYYAYLK…MEIQKEISYQ (230 aa)) enclose the Radical SAM core domain. Residues 372–436 (LSKVGKQLEV…AYEYDLVGEY (65 aa)) enclose the TRAM domain.

This sequence belongs to the methylthiotransferase family. RimO subfamily. [4Fe-4S] cluster is required as a cofactor.

The protein resides in the cytoplasm. The catalysed reaction is L-aspartate(89)-[ribosomal protein uS12]-hydrogen + (sulfur carrier)-SH + AH2 + 2 S-adenosyl-L-methionine = 3-methylsulfanyl-L-aspartate(89)-[ribosomal protein uS12]-hydrogen + (sulfur carrier)-H + 5'-deoxyadenosine + L-methionine + A + S-adenosyl-L-homocysteine + 2 H(+). Functionally, catalyzes the methylthiolation of an aspartic acid residue of ribosomal protein uS12. In Thermoanaerobacter sp. (strain X514), this protein is Ribosomal protein uS12 methylthiotransferase RimO.